The chain runs to 533 residues: Probable protein kinase UbiB (533 aa).

The chain crosses the membrane as a helical span at residues 24-44 (LILELPMLPWWLRLLGATLPW). The Protein kinase domain occupies 126-494 (RFEREPLASA…WKGSRHDWLG (369 aa)). ATP is bound by residues 132–140 (LASASVAQV) and Lys154. Asp289 acts as the Proton acceptor in catalysis. A helical membrane pass occupies residues 510–530 (LGQQLEAWPAWVMLAGGVFLI).

Belongs to the ABC1 family. UbiB subfamily.

Its subcellular location is the cell inner membrane. It functions in the pathway cofactor biosynthesis; ubiquinone biosynthesis [regulation]. Is probably a protein kinase regulator of UbiI activity which is involved in aerobic coenzyme Q (ubiquinone) biosynthesis. This Pseudomonas aeruginosa (strain UCBPP-PA14) protein is Probable protein kinase UbiB.